A 392-amino-acid chain; its full sequence is 6-aminohexanoate-dimer hydrolase (392 aa).

The tract at residues 1–27 is disordered; that stretch reads MNTPTTGSHPARYPSAAAGEPTLDSWQ. Residue S112 is part of the active site.

The enzyme catalyses [N-(6-aminohexanoyl)](n) + H2O = [N-(6-aminohexanoyl)](n-1) + 6-aminohexanoate. It carries out the reaction N-(6-aminohexanoyl)-6-aminohexanoate + H2O = 2 6-aminohexanoate. It participates in xenobiotic degradation; nylon-6 oligomer degradation. Involved in nylon oligomer degradation. The protein is 6-aminohexanoate-dimer hydrolase of Paenarthrobacter ureafaciens.